The following is a 239-amino-acid chain: Purine nucleoside phosphorylase DeoD-type 1 (239 aa).

H5 contacts a purine D-ribonucleoside. Phosphate is bound by residues G21, R25, R44, and R88–S91. Residues E180–E182 and S204–D205 each bind a purine D-ribonucleoside. D205 acts as the Proton donor in catalysis.

Belongs to the PNP/UDP phosphorylase family. In terms of assembly, homohexamer; trimer of homodimers.

The catalysed reaction is a purine D-ribonucleoside + phosphate = a purine nucleobase + alpha-D-ribose 1-phosphate. It catalyses the reaction a purine 2'-deoxy-D-ribonucleoside + phosphate = a purine nucleobase + 2-deoxy-alpha-D-ribose 1-phosphate. Catalyzes the reversible phosphorolytic breakdown of the N-glycosidic bond in the beta-(deoxy)ribonucleoside molecules, with the formation of the corresponding free purine bases and pentose-1-phosphate. This is Purine nucleoside phosphorylase DeoD-type 1 from Vibrio parahaemolyticus serotype O3:K6 (strain RIMD 2210633).